The primary structure comprises 248 residues: Probable transcriptional regulatory protein RPC_4807 (248 aa).

The disordered stretch occupies residues 1–21 (MAGHSQFKNIMHRKGRQDAQK).

This sequence belongs to the TACO1 family.

Its subcellular location is the cytoplasm. The sequence is that of Probable transcriptional regulatory protein RPC_4807 from Rhodopseudomonas palustris (strain BisB18).